The sequence spans 269 residues: MGNHQAVKKLWVINNFSFLDSDRVYSDIFVVGGCKWCLLALPEGNNNYIYDYFSLYLCVPDSEYLPSGWRRRAKVSFTMVNQVTGELSQQQEGVYWFDEKNTTQGFGSMFRLLVFQSSYKGFLVNGEVDIVAEVDVVEVIGKLDVSEESESIDSNGFDVLASQVESVNSLFGKYPCFASKLCPKTPRLKKNVVQSLNEILCKSTKELSNGDLAEAYSALRFVTKAGFKLDWLEKKLKETGKSRLQEIEEDLKDLKVKCADMDALLEFLR.

The MATH domain maps to 6-134; the sequence is AVKKLWVINN…NGEVDIVAEV (129 aa). A coiled-coil region spans residues 228–269; sequence KLDWLEKKLKETGKSRLQEIEEDLKDLKVKCADMDALLEFLR.

In Arabidopsis thaliana (Mouse-ear cress), this protein is MATH domain and coiled-coil domain-containing protein At2g01790.